The chain runs to 475 residues: Ankyrin repeat, SAM and basic leucine zipper domain-containing protein 1 (475 aa).

Residues 1 to 25 (MAAGALRGLPVAGGGESSESEDDGW) are disordered. Serine 17, serine 18, and serine 20 each carry phosphoserine. ANK repeat units lie at residues 45-74 (EKKE…SVDS), 78-107 (YGWT…NASF), 110-144 (DKQT…DPNV), 148-177 (RLMT…EVNT), 181-210 (NGYT…NKML), and 214-243 (DGKM…PLEG). The region spanning 272-334 (SYTAFGDLEV…KILAALKELQ (63 aa)) is the SAM domain.

As to quaternary structure, interacts with DDX4, PIWIL1, RANBP9 and TDRD1.

The protein localises to the cytoplasm. Plays a central role during spermatogenesis by repressing transposable elements and preventing their mobilization, which is essential for the germline integrity. Acts via the piRNA metabolic process, which mediates the repression of transposable elements during meiosis by forming complexes composed of piRNAs and Piwi proteins and governs the methylation and subsequent repression of transposons. Its association with pi-bodies suggests a participation in the primary piRNAs metabolic process. Required prior to the pachytene stage to facilitate the production of multiple types of piRNAs, including those associated with repeats involved in the regulation of retrotransposons. May act by mediating protein-protein interactions during germ cell maturation. In Chlorocebus aethiops (Green monkey), this protein is Ankyrin repeat, SAM and basic leucine zipper domain-containing protein 1 (ASZ1).